A 604-amino-acid polypeptide reads, in one-letter code: UvrABC system protein C (604 aa).

Residues 17 to 95 enclose the GIY-YIG domain; sequence AQPGVYRMLN…IKSLAPRYNI (79 aa). The 36-residue stretch at 204–239 folds into the UVR domain; that stretch reads DEVLKTIEQKMFTASDQQDYEQAAQLRDQMQALRKI.

The protein belongs to the UvrC family. In terms of assembly, interacts with UvrB in an incision complex.

The protein localises to the cytoplasm. Functionally, the UvrABC repair system catalyzes the recognition and processing of DNA lesions. UvrC both incises the 5' and 3' sides of the lesion. The N-terminal half is responsible for the 3' incision and the C-terminal half is responsible for the 5' incision. This Nitrosomonas europaea (strain ATCC 19718 / CIP 103999 / KCTC 2705 / NBRC 14298) protein is UvrABC system protein C.